The sequence spans 477 residues: Enolase 1, chloroplastic (477 aa).

The transit peptide at 1–41 directs the protein to the chloroplast; sequence MALTTKPHHLQRSFLSPSRVSGERYLESAPSCLRFRRSGVQ. Substrate is bound by residues His203 and Glu212. The active-site Proton donor is Glu255. Positions 290, 340, and 365 each coordinate Mg(2+). The substrate site is built by Glu340 and Asp365. The active-site Proton acceptor is the Lys390. Substrate-binding positions include 417 to 420 and Lys441; that span reads SHRS. A Phosphoserine modification is found at Ser476.

This sequence belongs to the enolase family. It depends on Mg(2+) as a cofactor. As to expression, highly expressed in young roots, young siliques, and shoot apex. Lowly expressed in young leaves, stems and cotyledons.

The protein resides in the plastid. It localises to the chloroplast. It catalyses the reaction (2R)-2-phosphoglycerate = phosphoenolpyruvate + H2O. The protein operates within carbohydrate degradation; glycolysis; pyruvate from D-glyceraldehyde 3-phosphate: step 4/5. The chain is Enolase 1, chloroplastic (ENO1) from Arabidopsis thaliana (Mouse-ear cress).